The chain runs to 116 residues: Large ribosomal subunit protein bL20 (116 aa).

This sequence belongs to the bacterial ribosomal protein bL20 family.

Functionally, binds directly to 23S ribosomal RNA and is necessary for the in vitro assembly process of the 50S ribosomal subunit. It is not involved in the protein synthesizing functions of that subunit. This chain is Large ribosomal subunit protein bL20, found in Thermosynechococcus vestitus (strain NIES-2133 / IAM M-273 / BP-1).